The primary structure comprises 970 residues: Rho GTPase-activating protein gacK (970 aa).

The N-terminal stretch at 1-20 is a signal peptide; that stretch reads MTLVYEKSSFVLIMAQIAEA. Disordered regions lie at residues 30–49, 258–285, 312–446, 487–550, and 860–886; these read SNDL…SAAI, STCS…INQN, EITI…FSPT, STSN…NNNN, and TASS…NDDP. Composition is skewed to low complexity over residues 35–49 and 258–269; these read STSA…SAAI and STCSLSSNASNN. A compositionally biased stretch (pro residues) spans 321–333; that stretch reads IPLPPQSSSPPPT. Residues 334 to 383 are compositionally biased toward low complexity; the sequence is RNNQSSPSPSSPQQQNIMPTPPSTSLTPPQSPTLSPSSSTHSTPTQTTTT. Residues 392–406 are compositionally biased toward polar residues; that stretch reads PSTISQNNARKTQIP. Positions 407 to 426 are enriched in low complexity; it reads TTTTTTTTTTTTTSTTSTTS. A compositionally biased stretch (polar residues) spans 427–446; that stretch reads PNPVVNNKNLNTPSSSFSPT. Residues 754 to 970 enclose the Rho-GAP domain; sequence IEDSELVEDN…LELIQFNKSL (217 aa). Over residues 860-885 the composition is skewed to low complexity; it reads TASSAATANSSSSGSGNGNSSPNNDD.

The protein localises to the cytoplasm. Its function is as follows. Rho GTPase-activating protein involved in the signal transduction pathway. The chain is Rho GTPase-activating protein gacK (gacK) from Dictyostelium discoideum (Social amoeba).